The sequence spans 754 residues: Nibrin (754 aa).

An FHA domain is found at 24–83 (YVVGRKNCAILIENDQSISRNHAVLTANFSVTNLSQTDEIPVLTLKDNSKYGTFVNEEKM). 2 BRCT domains span residues 105-181 (KFRI…TEFL) and 224-315 (GKTF…LAVI). Residues 111–328 (EPLVACSSCL…TKNYCDPQGH (218 aa)) are mediates interaction with SP100. Positions 221–402 (IFKGKTFIFL…FRMLSQDAPT (182 aa)) are interaction with MTOR, MAPKAP1 and RICTOR. Ser278 is modified (phosphoserine; by ATM). A disordered region spans residues 326 to 346 (QGHPSTGLKTTTPGPSLSQGV). A compositionally biased stretch (polar residues) spans 328-346 (HPSTGLKTTTPGPSLSQGV). Thr337 bears the Phosphothreonine mark. Residue Ser343 is modified to Phosphoserine; by ATM. Phosphoserine is present on Ser347. At Lys388 the chain carries N6-lactoyllysine. Disordered stretches follow at residues 396–415 (LSQDAPTVKESCKTSSNNNS) and 430–478 (QLSP…MSSC). Residue Ser397 is modified to Phosphoserine. At Thr402 the chain carries Phosphothreonine. 2 stretches are compositionally biased toward polar residues: residues 430-440 (QLSPTKLPSIN) and 447-462 (SQQQQTNSIRNYFQPS). Ser432 bears the Phosphoserine; by CDK2 mark. Residue Lys435 forms a Glycyl lysine isopeptide (Lys-Gly) (interchain with G-Cter in ubiquitin) linkage. The Nuclear localization signal motif lies at 461–467 (PSTKKRE). Phosphoserine occurs at positions 509 and 518. Residues Lys529, Lys571, and Lys582 each participate in a glycyl lysine isopeptide (Lys-Gly) (interchain with G-Cter in SUMO2) cross-link. Phosphoserine is present on residues Ser615 and Ser673. Residues Lys686, Lys690, and Lys735 each participate in a glycyl lysine isopeptide (Lys-Gly) (interchain with G-Cter in ubiquitin) cross-link. Positions 740-749 (ADDLFRYNPY) match the FxF/Y motif motif.

This sequence belongs to the Nibrin family. Component of the MRN complex composed of two heterodimers RAD50 and MRE11 associated with a single NBN. The MRN complexes dimerize on DNA to form joined MRN-MRN oligomers required for DNA double-strand break repair. As part of the MRN complex, interacts with MCM9; the interaction recruits the complex to DNA repair sites. Component of the BASC complex, at least composed of BRCA1, MSH2, MSH6, MLH1, ATM, BLM, RAD50, MRE11 and NBN. Interacts with histone H2AX; this requires phosphorylation of H2AX on 'Ser-139' and promotes NBN recruitment to DNA damage sites. Interacts with (phosphorylated) MDC1; promoting NBN recruitment to DNA damage sites. Interacts with (phosphorylated) RAD17; promoting NBN recruitment to DNA damage sites. Interacts (via FxF/Y motif) with ATM. Interacts with HJURP. Interacts with INTS3. Interacts with KPNA2. Interacts with TERF2; interaction is disrupted upon NBN phosphorylation by CDK2. Interacts with (phosphorylated) RBBP8/CtIP; the interaction links the role of the MRN complex in DNA double-strand break sensing to resection. Interacts with SP100; recruits NBN to PML bodies. Interacts with ATF2. Interacts with MTOR, MAPKAP1 isoform 2 and RICTOR; indicative for an association with the mTORC2 complex. Interacts with MRNIP. Interacts with UFL1; promoting UFL1 recruitment to double-strand breaks following DNA damage. Interacts with CYREN (via XLF motif). In terms of assembly, (Microbial infection) Interacts with herpes simplex virus 1 protein UL12. Phosphorylated by ATM in response of ionizing radiation, and such phosphorylation is responsible intra-S phase checkpoint control and telomere maintenance. Phosphorylated at Ser-432 by CDK2 in S/G2 phases abolishes interaction with TERF2, enabling DCLRE1B/Apollo recruitment to telomeres. Phosphorylation at Ser-432 in response to dysfunctional telomeres promotes non-homologous end joining repair at telomeres, while dephosphorylation by PPP1CA promotes microhomology-mediated end-joining (MMEJ) repair. In terms of processing, ubiquitinated at Lys-435 via 'Lys-6'-linked ubiquitin chains by RNF8, promoting NBN recruitment to DNA double-strand breaks (DSBs). Ubiquitinated at Lys-686 and Lys-689 via 'Lys-63'-linked ubiquitin chains by PELI1: ubiquitination takes place following PELI1 phosphorylation and promotes ATM activation and DNA repair. Ubiquitinated at Lys-735 via 'Lys-63'-linked ubiquitin chains by the SCF(SKP2) complex: ubiquitination takes place following SKP2 phosphorylation and promotes ATM activation and DNA repair. Post-translationally, lactylation at Lys-388 by KAT5 in response to DNA damage promotes recruitment of the MRN complex to DNA damage sites. Delactylated by HDAC3. As to expression, ubiquitous. Expressed at high levels in testis.

It is found in the nucleus. It localises to the chromosome. Its subcellular location is the PML body. The protein resides in the telomere. Component of the MRN complex, which plays a central role in double-strand break (DSB) repair, DNA recombination, maintenance of telomere integrity and meiosis. The MRN complex is involved in the repair of DNA double-strand breaks (DSBs) via homologous recombination (HR), an error-free mechanism which primarily occurs during S and G2 phases. The complex (1) mediates the end resection of damaged DNA, which generates proper single-stranded DNA, a key initial steps in HR, and is (2) required for the recruitment of other repair factors and efficient activation of ATM and ATR upon DNA damage. The MRN complex possesses single-strand endonuclease activity and double-strand-specific 3'-5' exonuclease activity, which are provided by MRE11, to initiate end resection, which is required for single-strand invasion and recombination. Within the MRN complex, NBN acts as a protein-protein adapter, which specifically recognizes and binds phosphorylated proteins, promoting their recruitment to DNA damage sites. Recruits MRE11 and RAD50 components of the MRN complex to DSBs in response to DNA damage. Promotes the recruitment of PI3/PI4-kinase family members ATM, ATR, and probably DNA-PKcs to the DNA damage sites, activating their functions. Mediates the recruitment of phosphorylated RBBP8/CtIP to DSBs, leading to cooperation between the MRN complex and RBBP8/CtIP to initiate end resection. RBBP8/CtIP specifically promotes the endonuclease activity of the MRN complex to clear DNA ends containing protein adducts. The MRN complex is also required for the processing of R-loops. NBN also functions in telomere length maintenance via its interaction with TERF2: interaction with TERF2 during G1 phase preventing recruitment of DCLRE1B/Apollo to telomeres. NBN also promotes DNA repair choice at dysfunctional telomeres: NBN phosphorylation by CDK2 promotes non-homologous end joining repair at telomeres, while unphosphorylated NBN promotes microhomology-mediated end-joining (MMEJ) repair. Enhances AKT1 phosphorylation possibly by association with the mTORC2 complex. This is Nibrin from Homo sapiens (Human).